Here is an 823-residue protein sequence, read N- to C-terminus: Molybdenum cofactor sulfurase (823 aa).

N6-(pyridoxal phosphate)lysine is present on Lys228. The active site involves Cys392. The segment at 628–667 is disordered; sequence SSTRLAEPRRGLGSRKSPLRPAMPGAFPQDTPTPEAERNP. The MOSC domain maps to 644–819; that stretch reads SPLRPAMPGA…VMVGDVVTPS (176 aa).

It belongs to the class-V pyridoxal-phosphate-dependent aminotransferase family. MOCOS subfamily. The cofactor is pyridoxal 5'-phosphate.

It catalyses the reaction Mo-molybdopterin + L-cysteine + AH2 = thio-Mo-molybdopterin + L-alanine + A + H2O. Its pathway is cofactor biosynthesis; molybdopterin biosynthesis. Its function is as follows. Sulfurates the molybdenum cofactor. Sulfation of molybdenum is essential for xanthine dehydrogenase (XDH) and aldehyde oxidase (ADO) enzymes in which molybdenum cofactor is liganded by 1 oxygen and 1 sulfur atom in active form. In Aspergillus niger (strain ATCC MYA-4892 / CBS 513.88 / FGSC A1513), this protein is Molybdenum cofactor sulfurase.